Here is a 484-residue protein sequence, read N- to C-terminus: Poly(A) polymerase alpha-B (484 aa).

Positions 240-257 (RKQLHQLLPSHVLPKKKK) match the Nuclear localization signal 1 motif. 3 disordered regions span residues 276-314 (SVDS…PVSL), 326-356 (VPQN…SSTP), and 375-484 (KPVT…RLNR). Residues 392–407 (KRTSSPTNEESPKKTK) carry the Nuclear localization signal 2 motif. Basic and acidic residues predominate over residues 423-441 (EQNKLEPEELKEVHSEEKS). A compositionally biased stretch (low complexity) spans 451–464 (SSQRSSSTDLSDIS).

This sequence belongs to the poly(A) polymerase family. In terms of assembly, monomer.

It is found in the nucleus. The enzyme catalyses RNA(n) + ATP = RNA(n)-3'-adenine ribonucleotide + diphosphate. Polymerase that creates the 3'-poly(A) tail of mRNA's. May acquire specificity through interaction with a cleavage and polyadenylation factor (CPSF). In Xenopus laevis (African clawed frog), this protein is Poly(A) polymerase alpha-B (papola-b).